Here is a 421-residue protein sequence, read N- to C-terminus: Serine--tRNA ligase (421 aa).

An L-serine-binding site is contributed by 229–231 (TSE). Residues 260–262 (RKE) and valine 276 contribute to the ATP site. L-serine is bound at residue glutamate 283. ATP is bound at residue 347–350 (EIVS). L-serine is bound at residue threonine 383.

The protein belongs to the class-II aminoacyl-tRNA synthetase family. Type-1 seryl-tRNA synthetase subfamily. As to quaternary structure, homodimer. The tRNA molecule binds across the dimer.

The protein localises to the cytoplasm. The enzyme catalyses tRNA(Ser) + L-serine + ATP = L-seryl-tRNA(Ser) + AMP + diphosphate + H(+). It catalyses the reaction tRNA(Sec) + L-serine + ATP = L-seryl-tRNA(Sec) + AMP + diphosphate + H(+). It participates in aminoacyl-tRNA biosynthesis; selenocysteinyl-tRNA(Sec) biosynthesis; L-seryl-tRNA(Sec) from L-serine and tRNA(Sec): step 1/1. In terms of biological role, catalyzes the attachment of serine to tRNA(Ser). Is also able to aminoacylate tRNA(Sec) with serine, to form the misacylated tRNA L-seryl-tRNA(Sec), which will be further converted into selenocysteinyl-tRNA(Sec). This is Serine--tRNA ligase from Nitrosopumilus maritimus (strain SCM1).